Reading from the N-terminus, the 134-residue chain is Small ribosomal subunit protein bS6 (134 aa).

Residues 99–134 (EPSAMMQKRDRDERKDRERGRRRDEDGFSGDRNEEN) form a disordered region. A compositionally biased stretch (basic and acidic residues) spans 105–134 (QKRDRDERKDRERGRRRDEDGFSGDRNEEN).

The protein belongs to the bacterial ribosomal protein bS6 family.

Binds together with bS18 to 16S ribosomal RNA. This Methylobacterium nodulans (strain LMG 21967 / CNCM I-2342 / ORS 2060) protein is Small ribosomal subunit protein bS6.